Here is a 359-residue protein sequence, read N- to C-terminus: DNA replication and repair protein RecF (359 aa).

ATP is bound at residue 30-37 (GPNGSGKT).

Belongs to the RecF family.

It is found in the cytoplasm. The RecF protein is involved in DNA metabolism; it is required for DNA replication and normal SOS inducibility. RecF binds preferentially to single-stranded, linear DNA. It also seems to bind ATP. The protein is DNA replication and repair protein RecF of Aliivibrio salmonicida (strain LFI1238) (Vibrio salmonicida (strain LFI1238)).